Consider the following 173-residue polypeptide: Ribosome maturation factor RimM (173 aa).

Positions 98-170 constitute a PRC barrel domain; the sequence is EGEFYWCDLI…IMTVSPTEGL (73 aa).

The protein belongs to the RimM family. As to quaternary structure, binds ribosomal protein uS19.

It is found in the cytoplasm. An accessory protein needed during the final step in the assembly of 30S ribosomal subunit, possibly for assembly of the head region. Essential for efficient processing of 16S rRNA. May be needed both before and after RbfA during the maturation of 16S rRNA. It has affinity for free ribosomal 30S subunits but not for 70S ribosomes. The chain is Ribosome maturation factor RimM from Geobacter metallireducens (strain ATCC 53774 / DSM 7210 / GS-15).